A 494-amino-acid polypeptide reads, in one-letter code: Cheilanthifoline synthase (494 aa).

Residues 4–24 traverse the membrane as a helical segment; that stretch reads TIWLIISTVIIVLGIAKFLLG. C437 contacts heme.

This sequence belongs to the cytochrome P450 family. It depends on heme as a cofactor. In terms of tissue distribution, expressed in roots and at lower levels in stems, leaves and plantlets.

The protein localises to the endoplasmic reticulum membrane. The catalysed reaction is (S)-scoulerine + reduced [NADPH--hemoprotein reductase] + O2 = (S)-cheilanthifoline + oxidized [NADPH--hemoprotein reductase] + 2 H2O + H(+). Methylenedioxy bridge-forming cytochrome P450 involved in the biosynthesis of isoquinoline alkaloids. Converts (S)-scoulerine into (S)-cheilanthifoline, a precursor of sanguinarine. Catalyzes an oxidative reaction that does not incorporate oxygen into the product. This chain is Cheilanthifoline synthase, found in Argemone mexicana (Mexican prickly poppy).